The primary structure comprises 226 residues: Ribonuclease 3 (226 aa).

The RNase III domain maps to 6 to 128; sequence VNQLQKKLGY…LIGAIFLDSD (123 aa). Glutamate 41 serves as a coordination point for Mg(2+). Residue aspartate 45 is part of the active site. Aspartate 114 and glutamate 117 together coordinate Mg(2+). The active site involves glutamate 117. The region spanning 155-225 is the DRBM domain; sequence DPKTRLQEYL…AEQALIQLEL (71 aa).

This sequence belongs to the ribonuclease III family. In terms of assembly, homodimer. Requires Mg(2+) as cofactor.

The protein localises to the cytoplasm. It carries out the reaction Endonucleolytic cleavage to 5'-phosphomonoester.. Functionally, digests double-stranded RNA. Involved in the processing of primary rRNA transcript to yield the immediate precursors to the large and small rRNAs (23S and 16S). Processes some mRNAs, and tRNAs when they are encoded in the rRNA operon. Processes pre-crRNA and tracrRNA of type II CRISPR loci if present in the organism. This Proteus mirabilis (strain HI4320) protein is Ribonuclease 3.